The chain runs to 289 residues: Beta-lactamase Toho-2 (289 aa).

The first 28 residues, 1–28 (MVTKRVQRMMSAAAACIPLLLGSPTLYA), serve as a signal peptide directing secretion. Residue Ser-73 is the Acyl-ester intermediate of the active site. 235–237 (KTG) contacts substrate.

This sequence belongs to the class-A beta-lactamase family.

It carries out the reaction a beta-lactam + H2O = a substituted beta-amino acid. With respect to regulation, inhibited 16-fold better by the beta-lactamase inhibitor tazobactam than by clavulanic acid. Its function is as follows. Hydrolyzes beta-lactam antibiotics such as penicillin G, carbenicillin, cephaloridine, cefoxitin, cefotaxime, ceftazidime, and aztreonam. Has especially increased relative hydrolysis rates for cephalothin, cephaloridine, cefotaxime and ceftizoxime. The chain is Beta-lactamase Toho-2 (bla) from Escherichia coli.